A 61-amino-acid polypeptide reads, in one-letter code: UPF0181 protein KPN78578_22920 (61 aa).

The protein belongs to the UPF0181 family.

The chain is UPF0181 protein KPN78578_22920 from Klebsiella pneumoniae subsp. pneumoniae (strain ATCC 700721 / MGH 78578).